Reading from the N-terminus, the 223-residue chain is Sigma non-opioid intracellular receptor 1 (223 aa).

Residues 1 to 9 (MQWALGRRW) are Lumenal-facing. Positions 2-8 (QWALGRR) are targeting to endoplasmic reticulum-associated lipid droplets. Residues 10–30 (VWAALLLAAAAVLTQVVWLWL) form a helical membrane-spanning segment. Topologically, residues 31–223 (GTQSFVFQHE…FTTYLFGQDS (193 aa)) are cytoplasmic. Residues 99–106 (SLSEYVLL) are important for ligand-binding. The interval 177–223 (VIPSTLAFALADTIFSTQDFLTLFYTLRAYARGLRLEFTTYLFGQDS) is C-terminal hydrophobic region.

Belongs to the ERG2 family. Homotrimer. Forms a ternary complex with ANK2 and ITPR3. The complex is disrupted by agonists. Interacts with KCNA4. Interacts with KCNA2; cocaine consumption leads to increased interaction. Interacts with RNF112 in an oxidative stress-regulated manner.

It is found in the nucleus inner membrane. The protein localises to the nucleus outer membrane. It localises to the nucleus envelope. The protein resides in the cytoplasmic vesicle. Its subcellular location is the endoplasmic reticulum membrane. It is found in the membrane. The protein localises to the lipid droplet. It localises to the cell junction. The protein resides in the cell membrane. Its subcellular location is the cell projection. It is found in the growth cone. The protein localises to the postsynaptic density membrane. Functions in lipid transport from the endoplasmic reticulum and is involved in a wide array of cellular functions probably through regulation of the biogenesis of lipid microdomains at the plasma membrane. Involved in the regulation of different receptors it plays a role in BDNF signaling and EGF signaling. Also regulates ion channels like the potassium channel and could modulate neurotransmitter release. Plays a role in calcium signaling through modulation together with ANK2 of the ITP3R-dependent calcium efflux at the endoplasmic reticulum. Plays a role in several other cell functions including proliferation, survival and death. Originally identified for its ability to bind various psychoactive drugs it is involved in learning processes, memory and mood alteration. Necessary for proper mitochondrial axonal transport in motor neurons, in particular the retrograde movement of mitochondria. Plays a role in protecting cells against oxidative stress-induced cell death via its interaction with RNF112. This Mustela erminea (Ermine) protein is Sigma non-opioid intracellular receptor 1 (SIGMAR1).